Here is a 335-residue protein sequence, read N- to C-terminus: Protein-arginine kinase (335 aa).

The Phosphagen kinase C-terminal domain occupies 21–244; it reads IVMSSRIRLA…NQIIHEEKQI (224 aa). ATP is bound by residues 24–28, histidine 82, arginine 115, 166–170, and 197–202; these read SSRIR, RASVM, and RGIYGE.

This sequence belongs to the ATP:guanido phosphotransferase family.

It catalyses the reaction L-arginyl-[protein] + ATP = N(omega)-phospho-L-arginyl-[protein] + ADP + H(+). Functionally, catalyzes the specific phosphorylation of arginine residues in proteins. This chain is Protein-arginine kinase, found in Staphylococcus aureus (strain USA300).